Consider the following 96-residue polypeptide: Small ribosomal subunit protein bS6 (96 aa).

It belongs to the bacterial ribosomal protein bS6 family.

Functionally, binds together with bS18 to 16S ribosomal RNA. This is Small ribosomal subunit protein bS6 (rpsF) from Mycobacterium leprae (strain TN).